We begin with the raw amino-acid sequence, 432 residues long: MFVDQVKIYVKGGDGGNGMVAFRREKYVPKGGPAGGDGGKGGDVVFVVDEGLRTLMDFRYQRHFKAPRGENGMSKNQHGKNAEDLIVKVPPGTVVIDADTNEVLADLTEAGQRFVVAKGGRGGRGNTRFATASNPAPEIAENGEPGEERNIILELKLLADVGLVGFPSVGKSTLLSVVSAARPKIAEYHFTTLVPNLGVVETEDGRSFVMADLPGLIEGAHQGVGLGHQFLRHIERTRVIVHVIDMAAVEGRDPYNDYLVINEELKQYNLRLTERPQIVAANKMDMPNAEENLRRFKEKVGDAVPVFPISAATRQGVRELLFAIADLLETTPEFPLHEREDPAVQRVVYKYEKEEPPFTITRASDGAFILAGDKIEKLFKMTDFSREESVRRFARQLKAMGVDDALRERGAKDGDTIRLLDYEFEFVDDWDE.

The Obg domain occupies 1 to 158; sequence MFVDQVKIYV…RNIILELKLL (158 aa). One can recognise an OBG-type G domain in the interval 159-329; sequence ADVGLVGFPS…LLFAIADLLE (171 aa). GTP contacts are provided by residues 165–172, 190–194, 212–215, 282–285, and 310–312; these read GFPSVGKS, FTTLV, DLPG, NKMD, and SAA. Residues Ser172 and Thr192 each contribute to the Mg(2+) site. The OCT domain occupies 350 to 428; that stretch reads KYEKEEPPFT…LLDYEFEFVD (79 aa).

This sequence belongs to the TRAFAC class OBG-HflX-like GTPase superfamily. OBG GTPase family. In terms of assembly, monomer. The cofactor is Mg(2+).

The protein localises to the cytoplasm. Its function is as follows. An essential GTPase which binds GTP, GDP and possibly (p)ppGpp with moderate affinity, with high nucleotide exchange rates and a fairly low GTP hydrolysis rate. Plays a role in control of the cell cycle, stress response, ribosome biogenesis and in those bacteria that undergo differentiation, in morphogenesis control. This Geobacillus kaustophilus (strain HTA426) protein is GTPase Obg.